The primary structure comprises 159 residues: ATP synthase subunit b' (159 aa).

Residues 27–47 (ATLPLMAVQFLILTVILNALL) form a helical membrane-spanning segment.

This sequence belongs to the ATPase B chain family. As to quaternary structure, F-type ATPases have 2 components, F(1) - the catalytic core - and F(0) - the membrane proton channel. F(1) has five subunits: alpha(3), beta(3), gamma(1), delta(1), epsilon(1). F(0) has four main subunits: a(1), b(1), b'(1) and c(10-14). The alpha and beta chains form an alternating ring which encloses part of the gamma chain. F(1) is attached to F(0) by a central stalk formed by the gamma and epsilon chains, while a peripheral stalk is formed by the delta, b and b' chains.

Its subcellular location is the cellular thylakoid membrane. Functionally, f(1)F(0) ATP synthase produces ATP from ADP in the presence of a proton or sodium gradient. F-type ATPases consist of two structural domains, F(1) containing the extramembraneous catalytic core and F(0) containing the membrane proton channel, linked together by a central stalk and a peripheral stalk. During catalysis, ATP synthesis in the catalytic domain of F(1) is coupled via a rotary mechanism of the central stalk subunits to proton translocation. Its function is as follows. Component of the F(0) channel, it forms part of the peripheral stalk, linking F(1) to F(0). The b'-subunit is a diverged and duplicated form of b found in plants and photosynthetic bacteria. This chain is ATP synthase subunit b', found in Synechococcus sp. (strain PCC 6716).